The following is a 220-amino-acid chain: Probable cytidylate kinase (220 aa).

10–18 (GPAASGKSS) provides a ligand contact to ATP.

This sequence belongs to the cytidylate kinase family. Type 1 subfamily.

It catalyses the reaction CMP + ATP = CDP + ADP. It carries out the reaction dCMP + ATP = dCDP + ADP. The chain is Probable cytidylate kinase from Encephalitozoon cuniculi (strain GB-M1) (Microsporidian parasite).